A 465-amino-acid chain; its full sequence is tRNA (guanine(37)-N(1))-methyltransferase (465 aa).

S-adenosyl-L-methionine is bound by residues His-189, 227-228, and 255-256; these read DL and DA. The segment at 283-362 is disordered; that stretch reads YPKEGVPANE…GPGPPPSKPW (80 aa). Polar residues predominate over residues 291–320; that stretch reads NENSSSNGNHNDVREGSQNGANESSVASTT. Residues 343–352 show a composition bias toward basic residues; that stretch reads TKRRNNKRVR. Position 371 (Asn-371) interacts with S-adenosyl-L-methionine.

The protein belongs to the class I-like SAM-binding methyltransferase superfamily. TRM5/TYW2 family. As to quaternary structure, monomer.

The protein localises to the mitochondrion matrix. It localises to the nucleus. The protein resides in the cytoplasm. It catalyses the reaction guanosine(37) in tRNA + S-adenosyl-L-methionine = N(1)-methylguanosine(37) in tRNA + S-adenosyl-L-homocysteine + H(+). Specifically methylates the N1 position of guanosine-37 in various cytoplasmic and mitochondrial tRNAs. Methylation is not dependent on the nature of the nucleoside 5' of the target nucleoside. This is the first step in the biosynthesis of wybutosine (yW), a modified base adjacent to the anticodon of tRNAs and required for accurate decoding. The polypeptide is tRNA (guanine(37)-N(1))-methyltransferase (Sorghum bicolor (Sorghum)).